An 888-amino-acid chain; its full sequence is Valine--tRNA ligase (888 aa).

Positions 43 to 53 (PFTSGTLHLGH) match the 'HIGH' region motif. The short motif at 534-538 (KMSKS) is the 'KMSKS' region element. Position 537 (Lys-537) interacts with ATP.

It belongs to the class-I aminoacyl-tRNA synthetase family. ValS type 2 subfamily.

Its subcellular location is the cytoplasm. It catalyses the reaction tRNA(Val) + L-valine + ATP = L-valyl-tRNA(Val) + AMP + diphosphate. Catalyzes the attachment of valine to tRNA(Val). As ValRS can inadvertently accommodate and process structurally similar amino acids such as threonine, to avoid such errors, it has a 'posttransfer' editing activity that hydrolyzes mischarged Thr-tRNA(Val) in a tRNA-dependent manner. The sequence is that of Valine--tRNA ligase from Thermococcus kodakarensis (strain ATCC BAA-918 / JCM 12380 / KOD1) (Pyrococcus kodakaraensis (strain KOD1)).